Reading from the N-terminus, the 149-residue chain is Cytochrome c-type biogenesis protein CcmE (149 aa).

The Cytoplasmic segment spans residues Met-1–Arg-8. The chain crosses the membrane as a helical; Signal-anchor for type II membrane protein span at residues Leu-9–Ala-29. The Periplasmic segment spans residues Leu-30–Tyr-149. Heme contacts are provided by His-124 and Tyr-128.

This sequence belongs to the CcmE/CycJ family.

The protein localises to the cell inner membrane. Heme chaperone required for the biogenesis of c-type cytochromes. Transiently binds heme delivered by CcmC and transfers the heme to apo-cytochromes in a process facilitated by CcmF and CcmH. This is Cytochrome c-type biogenesis protein CcmE from Hahella chejuensis (strain KCTC 2396).